The chain runs to 433 residues: MAAHIALIAHDNKKDALVNFVQQHKSLFSRYDLIATGQTGELVRNKTGLAVDTVFSGPLGGDTQIATQIIDGTIAAVIFLIDPLYAQPHEPDIRTLLRLCEVYNVPLAINLATAKAVIKLLGKTKTGHLIFNPVAGQGNVERELDLIKEHLQSEINLKITFTSAEVNVTDQAKEIVKRIKQANEQSDGEGDSFIIASGGDGTVSGVAAALVNTGIPLGIIPRGTANAFSVALGIPTQIPGACQTINRGITKVVDTALCNDIPMLLLAGVGFEAEMVEKADRELKNNLGVMAYIFAGIQQAREQELFEAHIEIDSETTTMEASAITIANAAPPTSVFAQGAGQVSFTDGLLDITVASSQTALQGLQVVTNLFTSALSKNPSDNENVLHLYGESIKVTTSPPQKIVVDGEIIGTTPVEVKCLPKSLNIFAPVENS.

A methylglyoxal synthase region spans residues 1–126; it reads MAAHIALIAH…VIKLLGKTKT (126 aa). The MGS-like domain occupies 1 to 145; it reads MAAHIALIAH…GQGNVERELD (145 aa). Residue D62 is part of the active site. The region spanning 127 to 262 is the DAGKc domain; that stretch reads GHLIFNPVAG…VDTALCNDIP (136 aa).

It in the N-terminal section; belongs to the methylglyoxal synthase family.

This is an uncharacterized protein from Synechocystis sp. (strain ATCC 27184 / PCC 6803 / Kazusa).